Here is a 70-residue protein sequence, read N- to C-terminus: MPGVKAREQESFEEAYRKFKKQADRNLIVTECRARRFFEPMTEKRKKQKINARKKMLKRLYMLRRYESRL.

This sequence belongs to the bacterial ribosomal protein bS21 family.

This Wolinella succinogenes (strain ATCC 29543 / DSM 1740 / CCUG 13145 / JCM 31913 / LMG 7466 / NCTC 11488 / FDC 602W) (Vibrio succinogenes) protein is Small ribosomal subunit protein bS21.